Here is a 28-residue protein sequence, read N- to C-terminus: Cyclotide vodo I3 (28 aa).

Disulfide bonds link Cys-4/Cys-18, Cys-8/Cys-20, and Cys-13/Cys-25.

This is a cyclic peptide. Post-translationally, contains 3 disulfide bonds.

Functionally, probably participates in a plant defense mechanism. In Viola odorata (Sweet violet), this protein is Cyclotide vodo I3.